The sequence spans 714 residues: Fatty acid oxidation complex subunit alpha (714 aa).

The enoyl-CoA hydratase stretch occupies residues 1-190 (MDTVSAFKLE…KAGLVDEVVP (190 aa)). The 3-hydroxyacyl-CoA dehydrogenase stretch occupies residues 306–714 (GPLTSIAVLG…TFWPADERLT (409 aa)).

The protein in the N-terminal section; belongs to the enoyl-CoA hydratase/isomerase family. This sequence in the central section; belongs to the 3-hydroxyacyl-CoA dehydrogenase family. As to quaternary structure, heterotetramer of two alpha chains (FadJ) and two beta chains (FadI).

It is found in the cytoplasm. The catalysed reaction is a (3S)-3-hydroxyacyl-CoA = a (2E)-enoyl-CoA + H2O. It catalyses the reaction a 4-saturated-(3S)-3-hydroxyacyl-CoA = a (3E)-enoyl-CoA + H2O. It carries out the reaction a (3S)-3-hydroxyacyl-CoA + NAD(+) = a 3-oxoacyl-CoA + NADH + H(+). The enzyme catalyses (3S)-3-hydroxybutanoyl-CoA = (3R)-3-hydroxybutanoyl-CoA. Its pathway is lipid metabolism; fatty acid beta-oxidation. Functionally, catalyzes the formation of a hydroxyacyl-CoA by addition of water on enoyl-CoA. Also exhibits 3-hydroxyacyl-CoA epimerase and 3-hydroxyacyl-CoA dehydrogenase activities. This Klebsiella pneumoniae (strain 342) protein is Fatty acid oxidation complex subunit alpha.